Here is a 162-residue protein sequence, read N- to C-terminus: Transcriptional repressor NrdR (162 aa).

The interval 1–21 is disordered; that stretch reads MNCPDCGDEQTRVIDTETSAD. A zinc finger lies at 3–34; that stretch reads CPDCGDEQTRVIDTETSADGTSVRRRRECQRC. The ATP-cone domain maps to 49–139; the sequence is LQVKKRNGTI…VYKAFSEPQE (91 aa).

It belongs to the NrdR family. Zn(2+) serves as cofactor.

In terms of biological role, negatively regulates transcription of bacterial ribonucleotide reductase nrd genes and operons by binding to NrdR-boxes. The chain is Transcriptional repressor NrdR from Halorubrum lacusprofundi (strain ATCC 49239 / DSM 5036 / JCM 8891 / ACAM 34).